The sequence spans 355 residues: Alanine racemase (355 aa).

The active-site Proton acceptor; specific for D-alanine is the lysine 37. Lysine 37 bears the N6-(pyridoxal phosphate)lysine mark. Arginine 129 provides a ligand contact to substrate. The Proton acceptor; specific for L-alanine role is filled by tyrosine 251. Methionine 299 contributes to the substrate binding site.

It belongs to the alanine racemase family. The cofactor is pyridoxal 5'-phosphate.

It carries out the reaction L-alanine = D-alanine. It participates in amino-acid biosynthesis; D-alanine biosynthesis; D-alanine from L-alanine: step 1/1. Its function is as follows. Catalyzes the interconversion of L-alanine and D-alanine. May also act on other amino acids. This chain is Alanine racemase (alr), found in Deinococcus geothermalis (strain DSM 11300 / CIP 105573 / AG-3a).